Reading from the N-terminus, the 344-residue chain is Probable dual-specificity RNA methyltransferase RlmN (344 aa).

Catalysis depends on Glu-92, which acts as the Proton acceptor. The Radical SAM core domain occupies 98-325; that stretch reads DEDRATLCVS…TTIRASRGED (228 aa). A disulfide bridge links Cys-105 with Cys-330. Cys-112, Cys-116, and Cys-119 together coordinate [4Fe-4S] cluster. S-adenosyl-L-methionine-binding positions include 157–158, Ser-189, 211–213, and His-287; these read GE and SLH. Cys-330 acts as the S-methylcysteine intermediate in catalysis.

This sequence belongs to the radical SAM superfamily. RlmN family. [4Fe-4S] cluster is required as a cofactor.

It is found in the cytoplasm. It catalyses the reaction adenosine(2503) in 23S rRNA + 2 reduced [2Fe-2S]-[ferredoxin] + 2 S-adenosyl-L-methionine = 2-methyladenosine(2503) in 23S rRNA + 5'-deoxyadenosine + L-methionine + 2 oxidized [2Fe-2S]-[ferredoxin] + S-adenosyl-L-homocysteine. The catalysed reaction is adenosine(37) in tRNA + 2 reduced [2Fe-2S]-[ferredoxin] + 2 S-adenosyl-L-methionine = 2-methyladenosine(37) in tRNA + 5'-deoxyadenosine + L-methionine + 2 oxidized [2Fe-2S]-[ferredoxin] + S-adenosyl-L-homocysteine. Specifically methylates position 2 of adenine 2503 in 23S rRNA and position 2 of adenine 37 in tRNAs. The chain is Probable dual-specificity RNA methyltransferase RlmN from Bacteroides fragilis (strain ATCC 25285 / DSM 2151 / CCUG 4856 / JCM 11019 / LMG 10263 / NCTC 9343 / Onslow / VPI 2553 / EN-2).